A 305-amino-acid polypeptide reads, in one-letter code: UDP-3-O-acyl-N-acetylglucosamine deacetylase (305 aa).

The Zn(2+) site is built by H78, H237, and D241. H264 (proton donor) is an active-site residue.

This sequence belongs to the LpxC family. Zn(2+) is required as a cofactor.

It catalyses the reaction a UDP-3-O-[(3R)-3-hydroxyacyl]-N-acetyl-alpha-D-glucosamine + H2O = a UDP-3-O-[(3R)-3-hydroxyacyl]-alpha-D-glucosamine + acetate. Its pathway is glycolipid biosynthesis; lipid IV(A) biosynthesis; lipid IV(A) from (3R)-3-hydroxytetradecanoyl-[acyl-carrier-protein] and UDP-N-acetyl-alpha-D-glucosamine: step 2/6. Its function is as follows. Catalyzes the hydrolysis of UDP-3-O-myristoyl-N-acetylglucosamine to form UDP-3-O-myristoylglucosamine and acetate, the committed step in lipid A biosynthesis. In Burkholderia lata (strain ATCC 17760 / DSM 23089 / LMG 22485 / NCIMB 9086 / R18194 / 383), this protein is UDP-3-O-acyl-N-acetylglucosamine deacetylase.